Reading from the N-terminus, the 244-residue chain is tRNA uridine(34) hydroxylase (244 aa).

The Rhodanese domain occupies 129 to 219 (QGRELVMLDT…GILKYFEETD (91 aa)). The active-site Cysteine persulfide intermediate is the C183.

It belongs to the TrhO family.

The enzyme catalyses uridine(34) in tRNA + AH2 + O2 = 5-hydroxyuridine(34) in tRNA + A + H2O. Functionally, catalyzes oxygen-dependent 5-hydroxyuridine (ho5U) modification at position 34 in tRNAs. The protein is tRNA uridine(34) hydroxylase of Bordetella bronchiseptica (strain ATCC BAA-588 / NCTC 13252 / RB50) (Alcaligenes bronchisepticus).